Consider the following 488-residue polypeptide: Altronate oxidoreductase (488 aa).

18–29 (VIQFGEGNFLRA) contributes to the NAD(+) binding site.

This sequence belongs to the mannitol dehydrogenase family. UxaB subfamily.

It carries out the reaction D-altronate + NAD(+) = keto-D-tagaturonate + NADH + H(+). It participates in carbohydrate metabolism; pentose and glucuronate interconversion. The sequence is that of Altronate oxidoreductase from Pectobacterium atrosepticum (strain SCRI 1043 / ATCC BAA-672) (Erwinia carotovora subsp. atroseptica).